The following is a 112-amino-acid chain: Large ribosomal subunit protein bL17 (112 aa).

Belongs to the bacterial ribosomal protein bL17 family. As to quaternary structure, part of the 50S ribosomal subunit. Contacts protein L32.

The sequence is that of Large ribosomal subunit protein bL17 from Caldanaerobacter subterraneus subsp. tengcongensis (strain DSM 15242 / JCM 11007 / NBRC 100824 / MB4) (Thermoanaerobacter tengcongensis).